The primary structure comprises 203 residues: 3-isopropylmalate dehydratase small subunit (203 aa).

Belongs to the LeuD family. LeuD type 1 subfamily. As to quaternary structure, heterodimer of LeuC and LeuD.

The catalysed reaction is (2R,3S)-3-isopropylmalate = (2S)-2-isopropylmalate. The protein operates within amino-acid biosynthesis; L-leucine biosynthesis; L-leucine from 3-methyl-2-oxobutanoate: step 2/4. Functionally, catalyzes the isomerization between 2-isopropylmalate and 3-isopropylmalate, via the formation of 2-isopropylmaleate. This chain is 3-isopropylmalate dehydratase small subunit, found in Rhodospirillum centenum (strain ATCC 51521 / SW).